Here is a 247-residue protein sequence, read N- to C-terminus: MRKKLIAGNWKMNGSLAANEALVKGLRVGVGASVCQVALCVPSVYLAQCQALLVGTAIALGAQDLSQHEVGAFTGEISGAMLQEFGVRYCIVGHSERRQYHFETDALVAAKAQRALACGITPIVCVGETLAEREAGRTEEVVKRQLAAVIHANGHCISEVVVAYEPVWAIGTGKTASIEQAQQVHSVLRQQLQAASIQADRIQIIYGGSMNAANAAELLAQPDIDGGLVGGASLKVPDFLSIIASAC.

9–11 contacts substrate; the sequence is NWK. His94 serves as the catalytic Electrophile. Catalysis depends on Glu165, which acts as the Proton acceptor. Substrate is bound by residues Gly171, Ser209, and 230–231; that span reads GG.

Belongs to the triosephosphate isomerase family. As to quaternary structure, homodimer.

The protein localises to the cytoplasm. The enzyme catalyses D-glyceraldehyde 3-phosphate = dihydroxyacetone phosphate. The protein operates within carbohydrate biosynthesis; gluconeogenesis. It functions in the pathway carbohydrate degradation; glycolysis; D-glyceraldehyde 3-phosphate from glycerone phosphate: step 1/1. Its function is as follows. Involved in the gluconeogenesis. Catalyzes stereospecifically the conversion of dihydroxyacetone phosphate (DHAP) to D-glyceraldehyde-3-phosphate (G3P). The polypeptide is Triosephosphate isomerase (Albidiferax ferrireducens (strain ATCC BAA-621 / DSM 15236 / T118) (Rhodoferax ferrireducens)).